The following is a 126-amino-acid chain: Glycine cleavage system H protein (126 aa).

A Lipoyl-binding domain is found at 22 to 104 (VVFIGITDYA…YGAGWIIKVK (83 aa)). Residue K63 is modified to N6-lipoyllysine.

It belongs to the GcvH family. The glycine cleavage system is composed of four proteins: P, T, L and H. The cofactor is (R)-lipoate.

In terms of biological role, the glycine cleavage system catalyzes the degradation of glycine. The H protein shuttles the methylamine group of glycine from the P protein to the T protein. This chain is Glycine cleavage system H protein, found in Porphyromonas gingivalis (strain ATCC 33277 / DSM 20709 / CIP 103683 / JCM 12257 / NCTC 11834 / 2561).